The primary structure comprises 546 residues: Probable protein kinase UbiB (546 aa).

Positions 123-501 (DFDETPLASA…SRRQGQARYL (379 aa)) constitute a Protein kinase domain. Residues 129-137 (LASASIAQV) and Lys-152 each bind ATP. The active-site Proton acceptor is the Asp-287. The next 2 membrane-spanning stretches (helical) occupy residues 498–517 (ARYLLGVGASLLLAGVFLLT) and 522–541 (IEWGQISLAGAGLCWLLGWL).

The protein belongs to the ABC1 family. UbiB subfamily.

The protein resides in the cell inner membrane. The protein operates within cofactor biosynthesis; ubiquinone biosynthesis [regulation]. Is probably a protein kinase regulator of UbiI activity which is involved in aerobic coenzyme Q (ubiquinone) biosynthesis. The polypeptide is Probable protein kinase UbiB (Aeromonas hydrophila subsp. hydrophila (strain ATCC 7966 / DSM 30187 / BCRC 13018 / CCUG 14551 / JCM 1027 / KCTC 2358 / NCIMB 9240 / NCTC 8049)).